The chain runs to 118 residues: Large ribosomal subunit protein uL18 (118 aa).

The segment at 1–24 (MISKPDKNKTRQRRHARVRGKISG) is disordered. Over residues 10–20 (TRQRRHARVRG) the composition is skewed to basic residues.

Belongs to the universal ribosomal protein uL18 family. In terms of assembly, part of the 50S ribosomal subunit; part of the 5S rRNA/L5/L18/L25 subcomplex. Contacts the 5S and 23S rRNAs.

In terms of biological role, this is one of the proteins that bind and probably mediate the attachment of the 5S RNA into the large ribosomal subunit, where it forms part of the central protuberance. In Lactiplantibacillus plantarum (strain ATCC BAA-793 / NCIMB 8826 / WCFS1) (Lactobacillus plantarum), this protein is Large ribosomal subunit protein uL18.